Reading from the N-terminus, the 301-residue chain is Phosphate butyryltransferase (301 aa).

The protein belongs to the phosphate acetyltransferase and butyryltransferase family.

The enzyme catalyses butanoyl-CoA + phosphate = butanoyl phosphate + CoA. It participates in lipid metabolism; butanoate metabolism. Its function is as follows. Catalyzes the conversion of butyryl-CoA through butyryl phosphate to butyrate. The polypeptide is Phosphate butyryltransferase (ptb) (Clostridium acetobutylicum (strain ATCC 824 / DSM 792 / JCM 1419 / IAM 19013 / LMG 5710 / NBRC 13948 / NRRL B-527 / VKM B-1787 / 2291 / W)).